The following is a 152-amino-acid chain: Acidic phospholipase A2 57 (152 aa).

Residues 1-21 form the signal peptide; it reads MYPAHLLGLLAVCVSLLGAAS. Positions 22 to 27 are excised as a propeptide; it reads IPPLPL. Disulfide bonds link C38/C104, C54/C151, C56/C72, C71/C132, C78/C125, C88/C118, and C111/C123. Residues Y55, G57, and G59 each contribute to the Ca(2+) site. H75 is an active-site residue. D76 is a Ca(2+) binding site. D126 is an active-site residue.

This sequence belongs to the phospholipase A2 family. Group I subfamily. D49 sub-subfamily. Ca(2+) serves as cofactor. As to expression, expressed by the venom gland.

It is found in the secreted. It carries out the reaction a 1,2-diacyl-sn-glycero-3-phosphocholine + H2O = a 1-acyl-sn-glycero-3-phosphocholine + a fatty acid + H(+). PLA2 catalyzes the calcium-dependent hydrolysis of the 2-acyl groups in 3-sn-phosphoglycerides. This Hydrophis hardwickii (Hardwick's spine-bellied seasnake) protein is Acidic phospholipase A2 57.